Here is a 34-residue protein sequence, read N- to C-terminus: MPVNNFGFLATLLFVAVPMLFLIGLYIQTNSNKS.

Residues 7–27 traverse the membrane as a helical segment; the sequence is GFLATLLFVAVPMLFLIGLYI.

This sequence belongs to the PsbM family. As to quaternary structure, PSII is composed of 1 copy each of membrane proteins PsbA, PsbB, PsbC, PsbD, PsbE, PsbF, PsbH, PsbI, PsbJ, PsbK, PsbL, PsbM, PsbT, PsbX, PsbY, Psb30/Ycf12, peripheral proteins PsbO, CyanoQ (PsbQ), PsbU, PsbV and a large number of cofactors. It forms dimeric complexes.

Its subcellular location is the cellular thylakoid membrane. Its function is as follows. One of the components of the core complex of photosystem II (PSII). PSII is a light-driven water:plastoquinone oxidoreductase that uses light energy to abstract electrons from H(2)O, generating O(2) and a proton gradient subsequently used for ATP formation. It consists of a core antenna complex that captures photons, and an electron transfer chain that converts photonic excitation into a charge separation. This subunit is found at the monomer-monomer interface. The polypeptide is Photosystem II reaction center protein M (Prochlorococcus marinus (strain MIT 9303)).